A 780-amino-acid chain; its full sequence is Subtilisin-like protease SBT1.3 (780 aa).

Residues 1 to 25 (MANKNPLQKPFLFIILSINLIFLQA) form the signal peptide. Residues 26–120 (ETTTQISTKK…VIPETRYELH (95 aa)) constitute a propeptide, activation peptide. Residues 36-120 (TYVIHMDKSA…VIPETRYELH (85 aa)) form the Inhibitor I9 domain. The 513-residue stretch at 116 to 628 (RYELHTTRSP…AGHIDPLRAT (513 aa)) folds into the Peptidase S8 domain. The Charge relay system role is filled by aspartate 154. Asparagine 165 carries N-linked (GlcNAc...) asparagine glycosylation. Residue histidine 227 is the Charge relay system of the active site. The region spanning 384-477 (KQYPLVYLGR…GEKEGKLIKQ (94 aa)) is the PA domain. Asparagine 394 is a glycosylation site (N-linked (GlcNAc...) asparagine). Residue serine 560 is the Charge relay system of the active site. N-linked (GlcNAc...) asparagine glycosylation is found at asparagine 663 and asparagine 731.

It belongs to the peptidase S8 family.

The protein resides in the secreted. This is Subtilisin-like protease SBT1.3 from Arabidopsis thaliana (Mouse-ear cress).